We begin with the raw amino-acid sequence, 249 residues long: Sesquipedalian-1 (249 aa).

One can recognise a PH domain in the interval 17-113 (PVDNAGFLYK…WVKALSRASF (97 aa)). Disordered stretches follow at residues 134-159 (GGMALPQPQPQSLPLPPSLPSALAPV) and 194-219 (EATFRPGPEPPPPPPRRRASAPHGPL). Residues 140–152 (QPQPQSLPLPPSL) are compositionally biased toward pro residues. The residue at position 213 (Ser213) is a Phosphoserine. The F&amp;H motif lies at 223–235 (PFARLHECYGQEI).

The protein belongs to the sesquipedalian family. Forms homodimers and heterodimers with PHETA2. Interacts with OCRL and INPP5B. Interaction with OCRL may be important for endosomal morphology and function.

The protein resides in the early endosome. It is found in the recycling endosome. Its subcellular location is the golgi apparatus. It localises to the trans-Golgi network. The protein localises to the cytoplasmic vesicle. The protein resides in the clathrin-coated vesicle. Plays a role in endocytic trafficking. Required for receptor recycling from endosomes, both to the trans-Golgi network and the plasma membrane. This chain is Sesquipedalian-1, found in Homo sapiens (Human).